The primary structure comprises 285 residues: Vacuolar protein sorting-associated protein 37B (285 aa).

The segment at 50–170 (ASNRSLAEGN…EMVLKGQRLP (121 aa)) is interaction with IST1. The region spanning 84-173 (FEAYQIKKTK…LKGQRLPQAL (90 aa)) is the VPS37 C-terminal domain. Residues 175–201 (PLPPRLPELAPTAPLPYPAPEASGPPA) form a disordered region. Arginine 218 carries the omega-N-methylarginine modification. The disordered stretch occupies residues 230–285 (GQAVPYPGLQCPPLPPRVGLPTQQGFSSQFVSPYPPPLPQRPPPRLPPHQPGFILQ). Residues 250-260 (PTQQGFSSQFV) are compositionally biased toward polar residues. Residues 262-279 (PYPPPLPQRPPPRLPPHQ) are compositionally biased toward pro residues.

This sequence belongs to the VPS37 family. Component of the ESCRT-I complex (endosomal sorting complex required for transport I) which consists of TSG101, VPS28, a VPS37 protein (VPS37A to -D) and MVB12A or MVB12B in a 1:1:1:1 stoichiometry. Interacts with TSG101, VPS28, MVB12A and MVB12B. Component of the ESCRT-I complex (endosomal sorting complex required for transport I) which consists of TSG101, VPS28, a VPS37 protein (VPS37A to -D) and UBAP1 in a 1:1:1:1 stoichiometry. Interacts with CEP55. Interacts with IST1. Widely expressed. Expressed in macrophages and lymphocytes.

It is found in the late endosome membrane. Its function is as follows. Component of the ESCRT-I complex, a regulator of vesicular trafficking process. Required for the sorting of endocytic ubiquitinated cargos into multivesicular bodies. May be involved in cell growth and differentiation. This chain is Vacuolar protein sorting-associated protein 37B (VPS37B), found in Homo sapiens (Human).